Here is a 156-residue protein sequence, read N- to C-terminus: Ecotin (156 aa).

An N-terminal signal peptide occupies residues 1 to 19; it reads MKALLIAAGVAALSSTAMA. Cys-65 and Cys-102 are joined by a disulfide.

Belongs to the protease inhibitor I11 (ecotin) family. Homodimer.

It is found in the periplasm. Functionally, general inhibitor of family S1 serine proteases. The chain is Ecotin from Pseudomonas aeruginosa (strain UCBPP-PA14).